The following is a 177-amino-acid chain: Disulfide bond formation protein B (177 aa).

Topologically, residues 1–14 are cytoplasmic; it reads MLALLKQFSEKRFV. The helical transmembrane segment at 15–31 threads the bilayer; it reads WFLLAFSSLALESTALY. Residues 32–49 lie on the Periplasmic side of the membrane; sequence FQYGMGLQPCVLCVYERL. The cysteines at positions 41 and 44 are disulfide-linked. Residues 50 to 65 form a helical membrane-spanning segment; that stretch reads AMIGLFVAGIIALLQP. Residues 66-72 lie on the Cytoplasmic side of the membrane; sequence LAFILRL. Residues 73–90 form a helical membrane-spanning segment; sequence IALALGLFSSIKGLLISF. Residues 91 to 145 are Periplasmic-facing; it reads RHLDLQMNPAPWKQCEFIPNFPETLPFHQWFPFIFNPTGSCNESQWSLFGLTMVQ. Cysteine 105 and cysteine 131 form a disulfide bridge. A helical transmembrane segment spans residues 146-164; the sequence is WLVVIFSLYVVILTLLLIA. Over 165–177 the chain is Cytoplasmic; sequence QVIKTRKQRRLFN.

The protein belongs to the DsbB family.

It is found in the cell inner membrane. Required for disulfide bond formation in some periplasmic proteins. Acts by oxidizing the DsbA protein. In Haemophilus influenzae (strain 86-028NP), this protein is Disulfide bond formation protein B.